We begin with the raw amino-acid sequence, 275 residues long: 2,3,4,5-tetrahydropyridine-2,6-dicarboxylate N-succinyltransferase (275 aa).

Residues Arg-104 and Asp-141 each contribute to the substrate site.

It belongs to the transferase hexapeptide repeat family. As to quaternary structure, homotrimer.

The protein resides in the cytoplasm. The enzyme catalyses (S)-2,3,4,5-tetrahydrodipicolinate + succinyl-CoA + H2O = (S)-2-succinylamino-6-oxoheptanedioate + CoA. Its pathway is amino-acid biosynthesis; L-lysine biosynthesis via DAP pathway; LL-2,6-diaminopimelate from (S)-tetrahydrodipicolinate (succinylase route): step 1/3. The sequence is that of 2,3,4,5-tetrahydropyridine-2,6-dicarboxylate N-succinyltransferase from Tolumonas auensis (strain DSM 9187 / NBRC 110442 / TA 4).